The sequence spans 130 residues: Small ribosomal subunit protein uS9 (130 aa).

The protein belongs to the universal ribosomal protein uS9 family.

This is Small ribosomal subunit protein uS9 from Pasteurella multocida (strain Pm70).